The primary structure comprises 217 residues: Heart- and neural crest derivatives-expressed protein 2 (217 aa).

Residues 76–116 (DHSHYGGVPPGAGPPGLGGPRPVKRRGTANRKERRRTQSIN) are disordered. Positions 83–94 (VPPGAGPPGLGG) are enriched in gly residues. A compositionally biased stretch (basic residues) spans 97-112 (PVKRRGTANRKERRRT). The bHLH domain occupies 99–151 (KRRGTANRKERRRTQSINSAFAELRECIPNVPADTKLSKIKTLRLATSYIAYL).

As to quaternary structure, efficient DNA binding requires dimerization with another bHLH protein. Forms homodimers and heterodimers with TCF3 gene products E12 and E47, HAND1 and HEY1, HEY2 and HEYL (hairy-related transcription factors).

Its subcellular location is the nucleus. Its function is as follows. Essential for cardiac morphogenesis, particularly for the formation of the right ventricle and of the aortic arch arteries. Required for vascular development and regulation of angiogenesis, possibly through a VEGF signaling pathway. Also plays an important role in limb development, particularly in the establishment of anterior-posterior polarization, acting as an upstream regulator of sonic hedgehog (SHH) induction in the limb bud. Is involved in the development of branchial arches, which give rise to unique structures in the head and neck. Binds DNA on E-box consensus sequence 5'-CANNTG-3'. The polypeptide is Heart- and neural crest derivatives-expressed protein 2 (Hand2) (Rattus norvegicus (Rat)).